The sequence spans 273 residues: 3-methyl-2-oxobutanoate hydroxymethyltransferase (273 aa).

Positions 49 and 88 each coordinate Mg(2+). 3-methyl-2-oxobutanoate is bound by residues 49–50, D88, and K118; that span reads DS. A Mg(2+)-binding site is contributed by E120. E187 serves as the catalytic Proton acceptor.

It belongs to the PanB family. In terms of assembly, homodecamer; pentamer of dimers. Requires Mg(2+) as cofactor.

It localises to the cytoplasm. It catalyses the reaction 3-methyl-2-oxobutanoate + (6R)-5,10-methylene-5,6,7,8-tetrahydrofolate + H2O = 2-dehydropantoate + (6S)-5,6,7,8-tetrahydrofolate. It participates in cofactor biosynthesis; (R)-pantothenate biosynthesis; (R)-pantoate from 3-methyl-2-oxobutanoate: step 1/2. Catalyzes the reversible reaction in which hydroxymethyl group from 5,10-methylenetetrahydrofolate is transferred onto alpha-ketoisovalerate to form ketopantoate. This chain is 3-methyl-2-oxobutanoate hydroxymethyltransferase, found in Rhizobium rhizogenes (strain K84 / ATCC BAA-868) (Agrobacterium radiobacter).